Reading from the N-terminus, the 254-residue chain is HLA class II histocompatibility antigen, DR alpha chain (254 aa).

The signal sequence occupies residues 1-25 (MAISGVPVLGFFIIAVLMSAQESWA). Residues 26 to 109 (IKEEHVIIQA…KRSNYTPITN (84 aa)) form an alpha-1 region. Residues 26-216 (IKEEHVIIQA…APSPLPETTE (191 aa)) lie on the Extracellular side of the membrane. N-linked (GlcNAc...) asparagine glycans are attached at residues asparagine 103 and asparagine 143. The segment at 110–203 (VPPEVTVLTN…GLDEPLLKHW (94 aa)) is alpha-2. Residues 112 to 204 (PEVTVLTNSP…LDEPLLKHWE (93 aa)) form the Ig-like C1-type domain. Cysteine 132 and cysteine 188 are oxidised to a cystine. Residues 204 to 216 (EFDAPSPLPETTE) form a connecting peptide region. The helical transmembrane segment at 217–239 (NVVCALGLTVGLVGIIIGTIFII) threads the bilayer. Over 240–254 (KGLRKSNAAERRGPL) the chain is Cytoplasmic. A Glycyl lysine isopeptide (Lys-Gly) (interchain with G-Cter in ubiquitin) cross-link involves residue lysine 244.

The protein belongs to the MHC class II family. In terms of assembly, heterotrimer that consists of an alpha chain HLA-DRA, a beta chain HLA-DRB and a peptide (peptide-MHCII). Newly synthesized alpha and beta chains forms a heterodimer (MHCII) that associates with the CD74/invariant chain (Ii) in the endoplasmic reticulum (ER). Ii is a trimer composed of three subunits and each subunit interacts with one MHCII dimer, blocking the peptide-binding cleft. As a result, MHCII molecules cannot bind peptides present in the ER. The complex of MHCII and CD74/Ii is transported in vesicles from ER to Golgi to lysosomes, where it encounters antigenic peptides generated via proteolysis of endocytosed antigens. MHCII dimers are dissociated from CD74/Ii by the combined action of proteolysis and HLA-DM. Lysosomal enzymes such as cathepsin, degrade CD74/Ii leaving a 24 amino acid remnant called class II-associated Ii or CLIP. Interacts (via the peptide binding cleft) with CLIP; this interaction inhibits antigen peptide binding before entry in the endosomal compartment. The displacement of CLIP and replacement by a high affinity peptide in lysosomes is performed by HLA-DM heterodimer. HLA-DM catalyzes CLIP dissociation from MHCII, stabilizes empty MHCII and mediates the selection of high affinity peptides. Interacts with HLA-DM heterodimer; this interaction is direct. Interacts (via alpha-1 domain) with TCR (via CDRs). Interacts (via alpha-2 domain) with CD4 (via Ig-like V-type domain); this interaction increases the affinity of TCR for peptide-MHCII. (Microbial infection) Interacts with Epstein-Barr virus BZLF2/gp42. As to quaternary structure, (Microbial infection) Interacts with Staphylococcus aureus enterotoxin A/entA, enterotoxin B/entB, enterotoxin C1/entC1, enterotoxin D/entD, and enterotoxin H/entH. In terms of processing, ubiquitinated by MARCHF1 or MARCHF8 at Lys-244 leading to down-regulation of MHCII. When associated with ubiquitination of the beta chain at 'Lys-254', the down-regulation of MHCII may be highly effective. As to expression, expressed in professional APCs: macrophages, dendritic cells and B cells (at protein level). Expressed in thymic epithelial cells (at protein level).

Its subcellular location is the cell membrane. It localises to the endoplasmic reticulum membrane. The protein localises to the early endosome membrane. The protein resides in the late endosome membrane. It is found in the lysosome membrane. Its subcellular location is the autolysosome membrane. Functionally, an alpha chain of antigen-presenting major histocompatibility complex class II (MHCII) molecule. In complex with the beta chain HLA-DRB, displays antigenic peptides on professional antigen presenting cells (APCs) for recognition by alpha-beta T cell receptor (TCR) on HLA-DR-restricted CD4-positive T cells. This guides antigen-specific T-helper effector functions, both antibody-mediated immune response and macrophage activation, to ultimately eliminate the infectious agents and transformed cells. Typically presents extracellular peptide antigens of 10 to 30 amino acids that arise from proteolysis of endocytosed antigens in lysosomes. In the tumor microenvironment, presents antigenic peptides that are primarily generated in tumor-resident APCs likely via phagocytosis of apoptotic tumor cells or macropinocytosis of secreted tumor proteins. Presents peptides derived from intracellular proteins that are trapped in autolysosomes after macroautophagy, a mechanism especially relevant for T cell selection in the thymus and central immune tolerance. The selection of the immunodominant epitopes follows two processing modes: 'bind first, cut/trim later' for pathogen-derived antigenic peptides and 'cut first, bind later' for autoantigens/self-peptides. The anchor residue at position 1 of the peptide N-terminus, usually a large hydrophobic residue, is essential for high affinity interaction with MHCII molecules. This Homo sapiens (Human) protein is HLA class II histocompatibility antigen, DR alpha chain (HLA-DRA).